Here is a 232-residue protein sequence, read N- to C-terminus: Ethylene-responsive transcription factor ERF025 (232 aa).

The segment covering 1–29 (MSNNNNSPTTVNQETTTSREVSITLPTDQ) has biased composition (polar residues). The tract at residues 1-63 (MSNNNNSPTT…TATGLSGKHS (63 aa)) is disordered. The span at 30–50 (SPQTSPGSSSSPSPRPSGGSP) shows a compositional bias: low complexity. A DNA-binding region (AP2/ERF) is located at residues 64–120 (IFRGIRLRNGKWVSEIREPRKTTRIWLGTYPVPEMAAAAYDVAALALKGPDAVLNFP). The interval 213 to 232 (PTMEDDSPENHEGDNLWSYK) is disordered.

The protein belongs to the AP2/ERF transcription factor family. ERF subfamily.

It localises to the nucleus. Functionally, probably acts as a transcriptional activator. Binds to the GCC-box pathogenesis-related promoter element. May be involved in the regulation of gene expression by stress factors and by components of stress signal transduction pathways. This is Ethylene-responsive transcription factor ERF025 (ERF025) from Arabidopsis thaliana (Mouse-ear cress).